Consider the following 474-residue polypeptide: tRNA-2-methylthio-N(6)-dimethylallyladenosine synthase (474 aa).

The MTTase N-terminal domain occupies 3–120 (QKLHIKTWGC…LPEMINQIRG (118 aa)). 6 residues coordinate [4Fe-4S] cluster: Cys12, Cys49, Cys83, Cys157, Cys161, and Cys164. One can recognise a Radical SAM core domain in the interval 143 to 375 (RAEGPTAFVS…QQRINNQAAQ (233 aa)). One can recognise a TRAM domain in the interval 378-441 (RAMLGTEQRV…TNSLRGEVVR (64 aa)).

It belongs to the methylthiotransferase family. MiaB subfamily. In terms of assembly, monomer. [4Fe-4S] cluster serves as cofactor.

The protein localises to the cytoplasm. It carries out the reaction N(6)-dimethylallyladenosine(37) in tRNA + (sulfur carrier)-SH + AH2 + 2 S-adenosyl-L-methionine = 2-methylsulfanyl-N(6)-dimethylallyladenosine(37) in tRNA + (sulfur carrier)-H + 5'-deoxyadenosine + L-methionine + A + S-adenosyl-L-homocysteine + 2 H(+). Its function is as follows. Catalyzes the methylthiolation of N6-(dimethylallyl)adenosine (i(6)A), leading to the formation of 2-methylthio-N6-(dimethylallyl)adenosine (ms(2)i(6)A) at position 37 in tRNAs that read codons beginning with uridine. The chain is tRNA-2-methylthio-N(6)-dimethylallyladenosine synthase from Pasteurella multocida (strain Pm70).